We begin with the raw amino-acid sequence, 693 residues long: Glycine--tRNA ligase beta subunit (693 aa).

It belongs to the class-II aminoacyl-tRNA synthetase family. In terms of assembly, tetramer of two alpha and two beta subunits.

It is found in the cytoplasm. It carries out the reaction tRNA(Gly) + glycine + ATP = glycyl-tRNA(Gly) + AMP + diphosphate. This Vibrio vulnificus (strain CMCP6) protein is Glycine--tRNA ligase beta subunit.